The following is a 454-amino-acid chain: L-serine dehydratase TdcG (454 aa).

The protein belongs to the iron-sulfur dependent L-serine dehydratase family. [4Fe-4S] cluster serves as cofactor.

The enzyme catalyses L-serine = pyruvate + NH4(+). Its pathway is amino-acid degradation; L-threonine degradation via propanoate pathway. This is L-serine dehydratase TdcG (tdcG) from Escherichia coli (strain K12).